We begin with the raw amino-acid sequence, 897 residues long: Zinc finger protein zas1 (897 aa).

C2H2-type zinc fingers lie at residues 26 to 50 (FYCT…ERTH) and 56 to 79 (FSCS…QQMH). The C2H2-type 3; atypical zinc finger occupies 93-119 (ASCFLGFCVLAHDYVNLINARHFMIEH).

It localises to the nucleus. This is Zinc finger protein zas1 (zas1) from Schizosaccharomyces pombe (strain 972 / ATCC 24843) (Fission yeast).